The sequence spans 196 residues: Glycerol-3-phosphate acyltransferase (196 aa).

The next 4 membrane-spanning stretches (helical) occupy residues 5–25 (GLIAFAFGYLLGSIPFGMILT), 70–90 (VVIALLLSGPGAAMAATLGAF), 111–131 (IGVLLGLFWPAALAFCAIWLL), and 152–172 (LLLWGFGHPQFALLFAVLTVL).

Belongs to the PlsY family. As to quaternary structure, probably interacts with PlsX.

The protein resides in the cell inner membrane. The enzyme catalyses an acyl phosphate + sn-glycerol 3-phosphate = a 1-acyl-sn-glycero-3-phosphate + phosphate. Its pathway is lipid metabolism; phospholipid metabolism. Functionally, catalyzes the transfer of an acyl group from acyl-phosphate (acyl-PO(4)) to glycerol-3-phosphate (G3P) to form lysophosphatidic acid (LPA). This enzyme utilizes acyl-phosphate as fatty acyl donor, but not acyl-CoA or acyl-ACP. The sequence is that of Glycerol-3-phosphate acyltransferase from Nitrobacter winogradskyi (strain ATCC 25391 / DSM 10237 / CIP 104748 / NCIMB 11846 / Nb-255).